Here is a 66-residue protein sequence, read N- to C-terminus: Large ribosomal subunit protein bL33c (66 aa).

Belongs to the bacterial ribosomal protein bL33 family.

It is found in the plastid. Its subcellular location is the chloroplast. The protein is Large ribosomal subunit protein bL33c of Dioscorea elephantipes (Elephant's foot yam).